The primary structure comprises 354 residues: Glycerol-3-phosphate dehydrogenase [NAD(+)], glycosomal (354 aa).

NAD(+) contacts are provided by residues 15–20, F90, K118, and A150; that span reads GSGAFG. A substrate-binding site is contributed by K118. Residue K203 is the Proton acceptor of the active site. NAD(+)-binding residues include R267 and E293. 267–268 is a binding site for substrate; that stretch reads RN. The short motif at 352–354 is the Microbody targeting signal element; that stretch reads SKM.

This sequence belongs to the NAD-dependent glycerol-3-phosphate dehydrogenase family.

It localises to the glycosome. It catalyses the reaction sn-glycerol 3-phosphate + NAD(+) = dihydroxyacetone phosphate + NADH + H(+). The protein is Glycerol-3-phosphate dehydrogenase [NAD(+)], glycosomal (GPD) of Trypanosoma brucei brucei.